We begin with the raw amino-acid sequence, 449 residues long: N-succinylarginine dihydrolase (449 aa).

Residues 19–28, Asn110, and 137–138 each bind substrate; these read GGLSYGNVAS and HR. The interval 23 to 43 is disordered; the sequence is YGNVASQSNSQQGSNPREAAR. Over residues 25–37 the composition is skewed to polar residues; the sequence is NVASQSNSQQGSN. Residue Glu174 is part of the active site. Position 214 (Arg214) interacts with substrate. The active site involves His250. Residues Asp252 and Asn365 each coordinate substrate. Cys371 serves as the catalytic Nucleophile.

The protein belongs to the succinylarginine dihydrolase family. Homodimer.

It carries out the reaction N(2)-succinyl-L-arginine + 2 H2O + 2 H(+) = N(2)-succinyl-L-ornithine + 2 NH4(+) + CO2. It participates in amino-acid degradation; L-arginine degradation via AST pathway; L-glutamate and succinate from L-arginine: step 2/5. Catalyzes the hydrolysis of N(2)-succinylarginine into N(2)-succinylornithine, ammonia and CO(2). This is N-succinylarginine dihydrolase from Pseudomonas putida (strain GB-1).